A 160-amino-acid polypeptide reads, in one-letter code: Endoribonuclease YbeY (160 aa).

Zn(2+) is bound by residues His-124, His-128, and His-134.

Belongs to the endoribonuclease YbeY family. Requires Zn(2+) as cofactor.

It is found in the cytoplasm. Functionally, single strand-specific metallo-endoribonuclease involved in late-stage 70S ribosome quality control and in maturation of the 3' terminus of the 16S rRNA. In Jannaschia sp. (strain CCS1), this protein is Endoribonuclease YbeY.